The following is an 817-amino-acid chain: Leucine--tRNA ligase (817 aa).

Positions 51 to 61 (PYPSGDLHVGH) match the 'HIGH' region motif. The short motif at 588–592 (RMSKS) is the 'KMSKS' region element. Lys-591 provides a ligand contact to ATP.

It belongs to the class-I aminoacyl-tRNA synthetase family.

The protein localises to the cytoplasm. It catalyses the reaction tRNA(Leu) + L-leucine + ATP = L-leucyl-tRNA(Leu) + AMP + diphosphate. This is Leucine--tRNA ligase from Rubrobacter xylanophilus (strain DSM 9941 / JCM 11954 / NBRC 16129 / PRD-1).